The sequence spans 1069 residues: Adenylate-forming reductase (1069 aa).

The interval histidine 20–arginine 391 is adenylation (A) domain. Residues histidine 262, alanine 357–histidine 358, threonine 362, and alanine 437–arginine 440 contribute to the AMP site. Residues aspartate 576–alanine 656 enclose the Carrier domain. Serine 612 bears the O-(pantetheine 4'-phosphoryl)serine mark. The interval threonine 686–arginine 1032 is reductase (R) domain. Residues threonine 693 to leucine 696, arginine 719, asparagine 785 to tryptophan 787, tyrosine 863, and lysine 867 each bind NADP(+).

The protein belongs to the adenylate-forming reductase family.

It catalyses the reaction 5-methylorsellinate + ATP + NADPH + H(+) = 2,4-dihydroxy 5,6-dimethylbenzaldehyde + AMP + diphosphate + NADP(+). It participates in secondary metabolite biosynthesis. Functionally, non-canonical non-ribosomal peptide synthetase; part of the cluster A that mediates the biosynthesis of azasperpyranones, members of the azaphilone family that exhibit anti-cancer activities. Azasperpyranones are synthesized by 2 clusters, A and B. Cluster A is responsible for the production of the polyhydric phenol moiety while the azaphilonoid scaffold is produced by the cluster B. The non-reducing polyketide synthase ATEG_03629 produces 5-methyl orsellinic acid, which is then reduced to 5-methyl orsellinic aldehyde by the NRPS-like protein ATEG_03630. 5-methyl orsellinic aldehyde is then first hydroxylated by the FAD-dependent monooxygenase ATEG_03635 and subsequently hydroxylated by the cytochrome P450 monooxygenase ATEG_03631 to produce the unstable polyhydric phenol precursor of azasperpyranones. On the other hand, the polyketide synthase ATEG_07659 is responsible for producing the 3,5-dimethyloctadienone moiety from acetyl-CoA, three malonyl-CoA, and two S-adenosyl methionines (SAM). The 3,5-dimethyloctadienone moiety is then loaded onto the SAT domain of ATEG_07661 and extended with four malonyl-CoA and one SAM, which leads to the formation of 2,4-dihydroxy-6-(5,7-dimethyl-2-oxo-trans-3-trans-5-nonadienyl)-3-methylbenzaldehyde (compound 8) after reductive release and aldol condensation. The FAD-dependent monooxygenase ATEG_07662 is the next enzyme in the biosynthesis sequence and hydroxylates the side chain at the benzylic position of compound 8. In Aspergillus nidulans, afoF, the ortholog of the FAD-dependent oxygenase ATEG_07660, is the key enzyme for the biosynthesis of asperfuranone by catalyzing the hydroxylation at C-8 of to prevent the formation of a six-membered ring hemiacetal intermediate and thus facilitating the formation of a five-membered ring to produce asperfuranone. In Aspergillus terreus, ATEG_07660 is probably not functional, which leads to the formation of the six-membered ring hemiacetal intermediate presperpyranone instead of asperfuranone. Finally, ATEG_03636 is involved in the condensation of the polyhydric phenol moiety produced by cluster A and the perasperpyranone precursor produced by cluster B, to yield azasperpyranone A. Further modifications of azasperpyranone A result in the production of derivatives, including azasperpyranone B to F. The chain is Adenylate-forming reductase from Aspergillus terreus (strain NIH 2624 / FGSC A1156).